The following is a 380-amino-acid chain: 1-deoxy-D-xylulose 5-phosphate reductoisomerase 2 (380 aa).

The NADPH site is built by Ser10, Gly11, Ser12, Ile13, Gly36, Lys37, Asn38, and Asn120. A 1-deoxy-D-xylulose 5-phosphate-binding site is contributed by Lys121. Glu122 lines the NADPH pocket. Asp146 is a binding site for Mn(2+). 1-deoxy-D-xylulose 5-phosphate contacts are provided by Ser147, Glu148, Ser172, and His195. Position 148 (Glu148) interacts with Mn(2+). An NADPH-binding site is contributed by Gly201. 4 residues coordinate 1-deoxy-D-xylulose 5-phosphate: Ser208, Asn213, Lys214, and Glu217. Glu217 provides a ligand contact to Mn(2+).

This sequence belongs to the DXR family. The cofactor is Mg(2+). Mn(2+) is required as a cofactor.

The catalysed reaction is 2-C-methyl-D-erythritol 4-phosphate + NADP(+) = 1-deoxy-D-xylulose 5-phosphate + NADPH + H(+). The protein operates within isoprenoid biosynthesis; isopentenyl diphosphate biosynthesis via DXP pathway; isopentenyl diphosphate from 1-deoxy-D-xylulose 5-phosphate: step 1/6. In terms of biological role, catalyzes the NADPH-dependent rearrangement and reduction of 1-deoxy-D-xylulose-5-phosphate (DXP) to 2-C-methyl-D-erythritol 4-phosphate (MEP). The protein is 1-deoxy-D-xylulose 5-phosphate reductoisomerase 2 of Bacillus thuringiensis subsp. konkukian (strain 97-27).